The sequence spans 1173 residues: PR domain zinc finger protein 10 (1173 aa).

Residues 146–211 form a disordered region; sequence RLPPMEGADS…AEPPRPFDPN (66 aa). Polar residues predominate over residues 154-167; it reads DSSTTINSLPSPNA. Residues 172-202 show a composition bias toward acidic residues; it reads KEDDDDDDDDDDDEEEEDDDGEDSDLDDWEA. An SET domain is found at 248-366; sequence LPLVLYIDRF…PKQELKVWYA (119 aa). The tract at residues 267–371 is N-terminal PR domain; essential for transcriptional activator activity; that stretch reads IPKRTQFGPL…KVWYAASYAE (105 aa). The C2H2-type 1 zinc-finger motif lies at 395–417; the sequence is WPCYECNRRFMSSEQLQQHLNSH. Residues 430–447 show a composition bias toward basic residues; it reads RGRTRTRRKFGPGRRPGR. Residues 430-451 are disordered; it reads RGRTRTRRKFGPGRRPGRPPKF. 9 C2H2-type zinc fingers span residues 559 to 581, 589 to 611, 617 to 639, 645 to 668, 673 to 695, 701 to 724, 756 to 779, 801 to 824, and 863 to 886; these read FKCLQCGKAFREKEKLDQHLRFH, LTCDICNKGFISTSSLENHMKFH, YSCIFCPESFDRLDLLKDHVVVH, FSCPTCKKRFTDFIQVKKHVRSFH, YQCTECDKAFCRPDKLRLHMLRH, FLCSTCGKQFKRKDKLREHMQRMH, FKCRVCMMGFRRRGMLVNHLSKRH, YYCQYCEKVYKSASKRKAHILKNH, and VCCPHCSKQYSSKTKMVQHIRKKH. Residues 926-1153 are C-terminal glutamine-rich region; essential for transcriptional activator activity; that stretch reads QAMTELSQTL…PASNSSQTTQ (228 aa). 2 disordered regions span residues 1014–1056 and 1125–1173; these read PTSG…ANSA and KKSS…ISKP. Over residues 1150–1160 the composition is skewed to low complexity; it reads QTTQYIITTTT. The segment covering 1161–1173 has biased composition (polar residues); it reads NMNGSSEVHISKP.

The protein belongs to the class V-like SAM-binding methyltransferase superfamily.

It is found in the nucleus. Its function is as follows. Transcriptional activator, essential for early embryonic development and survival of embryonic stem cells (ESCs). Supports cell growth and survival during early development by transcriptionally activating the expression of the translation initiation factor EIF3B, to sustain global translation. Activates the transcription of FLNC. In Xenopus tropicalis (Western clawed frog), this protein is PR domain zinc finger protein 10 (prdm10).